The primary structure comprises 354 residues: tRNA-specific 2-thiouridylase MnmA (354 aa).

ATP is bound by residues 7–14 and Met-33; that span reads AMSGGVDS. Cys-94 functions as the Nucleophile in the catalytic mechanism. Cys-94 and Cys-192 are joined by a disulfide. An ATP-binding site is contributed by Gly-118. The interaction with tRNA stretch occupies residues 141–143; sequence KDQ. The Cysteine persulfide intermediate role is filled by Cys-192. The interval 296–297 is interaction with tRNA; that stretch reads RY.

It belongs to the MnmA/TRMU family.

The protein resides in the cytoplasm. The catalysed reaction is S-sulfanyl-L-cysteinyl-[protein] + uridine(34) in tRNA + AH2 + ATP = 2-thiouridine(34) in tRNA + L-cysteinyl-[protein] + A + AMP + diphosphate + H(+). In terms of biological role, catalyzes the 2-thiolation of uridine at the wobble position (U34) of tRNA, leading to the formation of s(2)U34. The chain is tRNA-specific 2-thiouridylase MnmA from Trichlorobacter lovleyi (strain ATCC BAA-1151 / DSM 17278 / SZ) (Geobacter lovleyi).